We begin with the raw amino-acid sequence, 451 residues long: Serine--tRNA ligase (451 aa).

258-260 (TSE) provides a ligand contact to L-serine. Residue 289–291 (RSE) coordinates ATP. Residue glutamate 312 coordinates L-serine. 376–379 (EISS) provides a ligand contact to ATP. Serine 411 serves as a coordination point for L-serine.

The protein belongs to the class-II aminoacyl-tRNA synthetase family. Type-1 seryl-tRNA synthetase subfamily. In terms of assembly, homodimer. The tRNA molecule binds across the dimer.

It is found in the cytoplasm. The enzyme catalyses tRNA(Ser) + L-serine + ATP = L-seryl-tRNA(Ser) + AMP + diphosphate + H(+). It carries out the reaction tRNA(Sec) + L-serine + ATP = L-seryl-tRNA(Sec) + AMP + diphosphate + H(+). It functions in the pathway aminoacyl-tRNA biosynthesis; selenocysteinyl-tRNA(Sec) biosynthesis; L-seryl-tRNA(Sec) from L-serine and tRNA(Sec): step 1/1. In terms of biological role, catalyzes the attachment of serine to tRNA(Ser). Is also able to aminoacylate tRNA(Sec) with serine, to form the misacylated tRNA L-seryl-tRNA(Sec), which will be further converted into selenocysteinyl-tRNA(Sec). This is Serine--tRNA ligase from Bordetella pertussis (strain Tohama I / ATCC BAA-589 / NCTC 13251).